We begin with the raw amino-acid sequence, 123 residues long: Thioredoxin H-type 1 (123 aa).

At Ala2 the chain carries N-acetylalanine. Positions 2-119 (AATAEVIPAG…IEAKLLKHSQ (118 aa)) constitute a Thioredoxin domain. An intrachain disulfide couples Cys45 to Cys48.

It belongs to the thioredoxin family. Plant H-type subfamily.

Its subcellular location is the cytoplasm. Participates in various redox reactions through the reversible oxidation of the active center dithiol to a disulfide. The H form is known to activate a number of cytosolic enzymes. The protein is Thioredoxin H-type 1 (THL-1) of Brassica napus (Rape).